The primary structure comprises 355 residues: UDP-N-acetylglucosamine--N-acetylmuramyl-(pentapeptide) pyrophosphoryl-undecaprenol N-acetylglucosamine transferase (355 aa).

Residues 15 to 17 (TGG), Asn127, Arg163, Ser191, Ile244, 263 to 268 (ALTVSE), and Gln288 each bind UDP-N-acetyl-alpha-D-glucosamine.

This sequence belongs to the glycosyltransferase 28 family. MurG subfamily.

Its subcellular location is the cell inner membrane. The enzyme catalyses di-trans,octa-cis-undecaprenyl diphospho-N-acetyl-alpha-D-muramoyl-L-alanyl-D-glutamyl-meso-2,6-diaminopimeloyl-D-alanyl-D-alanine + UDP-N-acetyl-alpha-D-glucosamine = di-trans,octa-cis-undecaprenyl diphospho-[N-acetyl-alpha-D-glucosaminyl-(1-&gt;4)]-N-acetyl-alpha-D-muramoyl-L-alanyl-D-glutamyl-meso-2,6-diaminopimeloyl-D-alanyl-D-alanine + UDP + H(+). The protein operates within cell wall biogenesis; peptidoglycan biosynthesis. Cell wall formation. Catalyzes the transfer of a GlcNAc subunit on undecaprenyl-pyrophosphoryl-MurNAc-pentapeptide (lipid intermediate I) to form undecaprenyl-pyrophosphoryl-MurNAc-(pentapeptide)GlcNAc (lipid intermediate II). In Salmonella dublin (strain CT_02021853), this protein is UDP-N-acetylglucosamine--N-acetylmuramyl-(pentapeptide) pyrophosphoryl-undecaprenol N-acetylglucosamine transferase.